Consider the following 606-residue polypeptide: Glutamine--fructose-6-phosphate aminotransferase [isomerizing] (606 aa).

The active-site Nucleophile; for GATase activity is the C2. Residues 2-218 (CGIFGYLGQR…SGELAVLRIG (217 aa)) enclose the Glutamine amidotransferase type-2 domain. SIS domains lie at 278–424 (FAES…QRQE) and 455–596 (WRCR…VDRP). Residue K601 is the For Fru-6P isomerization activity of the active site.

In terms of assembly, homodimer.

Its subcellular location is the cytoplasm. It carries out the reaction D-fructose 6-phosphate + L-glutamine = D-glucosamine 6-phosphate + L-glutamate. Functionally, catalyzes the first step in hexosamine metabolism, converting fructose-6P into glucosamine-6P using glutamine as a nitrogen source. This chain is Glutamine--fructose-6-phosphate aminotransferase [isomerizing], found in Chlamydia muridarum (strain MoPn / Nigg).